Here is a 141-residue protein sequence, read N- to C-terminus: Lutropin subunit beta (141 aa).

The signal sequence occupies residues 1–20; it reads MEMLQGLLLWLLLSMGGARA. 6 cysteine pairs are disulfide-bonded: Cys29-Cys77, Cys43-Cys92, Cys46-Cys130, Cys54-Cys108, Cys58-Cys110, and Cys113-Cys120. 2 N-linked (GlcNAc...) asparagine glycosylation sites follow: Asn33 and Asn50.

It belongs to the glycoprotein hormones subunit beta family. Heterodimer of a common alpha chain and a unique beta chain which confers biological specificity to thyrotropin, lutropin, follitropin and gonadotropin.

Its subcellular location is the secreted. Promotes spermatogenesis and ovulation by stimulating the testes and ovaries to synthesize steroids. This is Lutropin subunit beta (LHB) from Macaca fascicularis (Crab-eating macaque).